A 436-amino-acid chain; its full sequence is Enolase (436 aa).

Gln167 contributes to the (2R)-2-phosphoglycerate binding site. Glu209 functions as the Proton donor in the catalytic mechanism. Asp246, Glu291, and Asp318 together coordinate Mg(2+). Residues Lys343, Arg372, Ser373, and Lys394 each contribute to the (2R)-2-phosphoglycerate site. The Proton acceptor role is filled by Lys343.

It belongs to the enolase family. As to quaternary structure, component of the RNA degradosome, a multiprotein complex involved in RNA processing and mRNA degradation. Mg(2+) serves as cofactor.

Its subcellular location is the cytoplasm. The protein localises to the secreted. It localises to the cell surface. The enzyme catalyses (2R)-2-phosphoglycerate = phosphoenolpyruvate + H2O. The protein operates within carbohydrate degradation; glycolysis; pyruvate from D-glyceraldehyde 3-phosphate: step 4/5. In terms of biological role, catalyzes the reversible conversion of 2-phosphoglycerate (2-PG) into phosphoenolpyruvate (PEP). It is essential for the degradation of carbohydrates via glycolysis. The polypeptide is Enolase (Glaesserella parasuis serovar 5 (strain SH0165) (Haemophilus parasuis)).